Consider the following 76-residue polypeptide: U1-cyrtautoxin-As1b (76 aa).

Intrachain disulfides connect C23–C37, C30–C51, C36–C66, and C69–C76.

Belongs to the neurotoxin 21 family. Expressed by the venom gland.

The protein localises to the secreted. In terms of biological role, neurotoxin with probable ion channel impairing activity. Is both paralytic and lethal, when injected into lepidopteran larvae. The polypeptide is U1-cyrtautoxin-As1b (Apomastus schlingeri (Trap-door spider)).